A 447-amino-acid chain; its full sequence is Thiol-specific monooxygenase (447 aa).

Residues 13–17, E38, 46–47, 91–92, and 137–138 each bind FAD; these read GAGPS, VW, NT, and DV. Position 90-91 (90-91) interacts with NADP(+); sequence TN. An NADP(+)-binding site is contributed by 223–226; the sequence is SAND.

This sequence belongs to the FMO family. In terms of assembly, monomer. FAD serves as cofactor.

In terms of biological role, flavin-dependent oxidation of thiol-containing compounds. Probably required for the correct folding of disulfide-bonded proteins. In Schizosaccharomyces pombe (strain 972 / ATCC 24843) (Fission yeast), this protein is Thiol-specific monooxygenase (fmo1).